A 258-amino-acid chain; its full sequence is Probable splicing factor, arginine/serine-rich 3 (258 aa).

In terms of domain architecture, RRM 1 spans 9-83; the sequence is QKVYVGNLPG…RRIRVEFTRG (75 aa). Disordered regions lie at residues 81–120 and 190–258; these read TRGVGPRGPGGRPLQDGGDHRGGDFRGGRGGGRGGGPQRR and AYIR…PSPQ. Basic and acidic residues predominate over residues 97 to 107; sequence GGDHRGGDFRG. Residues 108 to 117 are compositionally biased toward gly residues; that stretch reads GRGGGRGGGP. The 75-residue stretch at 123 to 197 folds into the RRM 2 domain; it reads YRVIVEGLPP…ETAYIRVRED (75 aa). A compositionally biased stretch (basic and acidic residues) spans 208 to 223; sequence GRDRSRSRSPRAERRA. Positions 228 to 246 are enriched in basic residues; that stretch reads SPRRSRSRSRSRSRSRSRS. Over residues 247–258 the composition is skewed to low complexity; it reads ASRSPSRSPSPQ.

It belongs to the splicing factor SR family. As to quaternary structure, interacts with spk-1. Directly phosphorylated by spk-1 in vitro on serine residues of the RS domain. In terms of tissue distribution, predominantly coexpressed with spk-1 in adult hermaphrodite germlines.

It localises to the nucleus. In terms of biological role, plays an essential role in embryogenesis. In Caenorhabditis elegans, this protein is Probable splicing factor, arginine/serine-rich 3 (rsp-3).